A 958-amino-acid chain; its full sequence is UPF0182 protein TW644 (958 aa).

A run of 7 helical transmembrane segments spans residues 14 to 34 (IAIL…FFLV), 59 to 79 (IFVV…LCMF), 107 to 127 (KIVV…FAAS), 166 to 186 (LFFL…ISVV), 205 to 225 (VQYA…FWLN), 249 to 269 (LIPG…LFCI), and 280 to 300 (IIGV…LPWG).

This sequence belongs to the UPF0182 family.

The protein resides in the cell membrane. This Tropheryma whipplei (strain TW08/27) (Whipple's bacillus) protein is UPF0182 protein TW644.